Reading from the N-terminus, the 249-residue chain is Triosephosphate isomerase (249 aa).

9 to 11 (NWK) provides a ligand contact to substrate. The Electrophile role is filled by His95. The Proton acceptor role is filled by Glu167. Substrate is bound by residues Gly173, Ser213, and 234–235 (GG).

This sequence belongs to the triosephosphate isomerase family. In terms of assembly, homodimer.

The protein resides in the cytoplasm. The catalysed reaction is D-glyceraldehyde 3-phosphate = dihydroxyacetone phosphate. It functions in the pathway carbohydrate biosynthesis; gluconeogenesis. Its pathway is carbohydrate degradation; glycolysis; D-glyceraldehyde 3-phosphate from glycerone phosphate: step 1/1. Functionally, involved in the gluconeogenesis. Catalyzes stereospecifically the conversion of dihydroxyacetone phosphate (DHAP) to D-glyceraldehyde-3-phosphate (G3P). In Solibacter usitatus (strain Ellin6076), this protein is Triosephosphate isomerase.